A 500-amino-acid chain; its full sequence is Cytochrome P450 2D27 (500 aa).

Cys-446 is a binding site for heme.

Belongs to the cytochrome P450 family. Heme is required as a cofactor. Expressed in liver, but not in kidney, small intestine, and brain.

Its subcellular location is the endoplasmic reticulum membrane. The protein localises to the microsome membrane. In terms of biological role, has bufuralol 1'-hydroxylase and debrisoquine 4-hydroxylase activities. This Mesocricetus auratus (Golden hamster) protein is Cytochrome P450 2D27 (CYP2D27).